The primary structure comprises 154 residues: Protein FAM162A (154 aa).

Residues 76 to 102 form a required for proapoptotic activity region; sequence RFKKEDEIPETVSLEMLDTAKNKMRVK. The helical transmembrane segment at 103–120 threads the bilayer; the sequence is ISYLMIALTVVGCICMVI.

The protein belongs to the UPF0389 family. Interacts with HSP90AB1; HSP90AB1 is essential for FAM162A mitochondrial localization and pro-apoptotic activity. Interacts with VDAC2; the interaction is probably involved in inducing mitochondrial permeability transition.

The protein resides in the mitochondrion membrane. Its function is as follows. Proposed to be involved in regulation of apoptosis; the exact mechanism may differ between cell types/tissues. May be involved in hypoxia-induced cell death of transformed cells implicating cytochrome C release and caspase activation (such as CASP9) and inducing mitochondrial permeability transition. May be involved in hypoxia-induced cell death of neuronal cells probably by promoting release of AIFM1 from mitochondria to cytoplasm and its translocation to the nucleus; however, the involvement of caspases has been reported conflictingly. This is Protein FAM162A (FAM162A) from Pongo abelii (Sumatran orangutan).